A 327-amino-acid chain; its full sequence is Ribosomal RNA small subunit methyltransferase H (327 aa).

S-adenosyl-L-methionine contacts are provided by residues Gly36 to His38, Asp55, Leu89, Asp103, and Gln110. Residues Gly286 to Arg327 are disordered.

Belongs to the methyltransferase superfamily. RsmH family.

The protein localises to the cytoplasm. It carries out the reaction cytidine(1402) in 16S rRNA + S-adenosyl-L-methionine = N(4)-methylcytidine(1402) in 16S rRNA + S-adenosyl-L-homocysteine + H(+). Functionally, specifically methylates the N4 position of cytidine in position 1402 (C1402) of 16S rRNA. This is Ribosomal RNA small subunit methyltransferase H from Parafrankia sp. (strain EAN1pec).